A 439-amino-acid polypeptide reads, in one-letter code: MTVTTRFAPSPTGHLHVGNVRTALHNWLWARKHGGRFLLRIDDTDVERSKEDYVAGIRADLAWLGLDIDAEERQSARFALYEAEFEKLKAAGRVYACYETPDELEVRRKILLSRGLPPVYERKPADAPVPEGVAPHWRFRLDHDAPIEWTDLIRGPQHFEPTTMSDPVVRRADGSWLYLLPSVIDDIAMGISHVVRGEDHVSNTAAQVQMFAALGASPPAFAHEALLVGTEGKLSKRLGSLGMASLREQGIEPIALAALLARLGTSDPVEPVTDLAPLVASIDFARFGRAPARFDEAELALLNQKILHHIDHAAVADRLPAAIDEARWKAIRPNLTTVAEAADWLPVFDGPFVPTATEAADRPVLRAAAKAALDIDWSADPWHALTAAVKEATGAKGRALFLPLRRALTGRDHGPDMAELLPLIAKEAAIARLTSAGGS.

A 'HIGH' region motif is present at residues 9–19; sequence PSPTGHLHVGN. Residues 233–237 carry the 'KMSKS' region motif; it reads KLSKR. Lysine 236 lines the ATP pocket.

It belongs to the class-I aminoacyl-tRNA synthetase family. Glutamate--tRNA ligase type 1 subfamily. As to quaternary structure, monomer.

The protein localises to the cytoplasm. It carries out the reaction tRNA(Glu) + L-glutamate + ATP = L-glutamyl-tRNA(Glu) + AMP + diphosphate. Functionally, catalyzes the attachment of glutamate to tRNA(Glu) in a two-step reaction: glutamate is first activated by ATP to form Glu-AMP and then transferred to the acceptor end of tRNA(Glu). The protein is Glutamate--tRNA ligase 2 of Sphingopyxis alaskensis (strain DSM 13593 / LMG 18877 / RB2256) (Sphingomonas alaskensis).